The following is a 55-amino-acid chain: Large ribosomal subunit protein bL33 (55 aa).

The protein belongs to the bacterial ribosomal protein bL33 family.

This chain is Large ribosomal subunit protein bL33, found in Enterobacter sp. (strain 638).